The sequence spans 119 residues: Holo-[acyl-carrier-protein] synthase (119 aa).

Positions 8 and 59 each coordinate Mg(2+).

This sequence belongs to the P-Pant transferase superfamily. AcpS family. The cofactor is Mg(2+).

It localises to the cytoplasm. The catalysed reaction is apo-[ACP] + CoA = holo-[ACP] + adenosine 3',5'-bisphosphate + H(+). Transfers the 4'-phosphopantetheine moiety from coenzyme A to a Ser of acyl-carrier-protein. The chain is Holo-[acyl-carrier-protein] synthase from Lactococcus lactis subsp. cremoris (strain SK11).